Here is a 404-residue protein sequence, read N- to C-terminus: MKFPIYLDYAATCPADDRVAEKMMQYLTRDGIFGNPASRSHKFGWQAEEAVDIARNHIADLIGADSREIVFTSGATESDNLAIKGAAHFYQTKGKHIITCKTEHKAVLDTCRQLEREGFEVTYLAPKSDGLVDLDEFRAAIRPDTILASIMHVNNEIGVIQDIEAIGKICREHKVIFHVDATQSVGKLPINLAELPVDLMSMSGHKLYGPKGIGALYVRRKPRVRLEAIIHGGGHERGMRSGTLAVHQIVGMGEAYRICKEEMAEEMAHVTKLRDRLYNGLKDIEETYVNGSMEHRVGSNLNISFNFVEGESLMMALRDIAVSSGSACTSASLEPSYVLRALGLNDELAHSSIRFSLGRYTTEEEIDYTIDLVKSAVKKLRDLSPLWDMFKEGIDMSKIEWSAH.

Pyridoxal 5'-phosphate contacts are provided by residues 75 to 76 (AT), asparagine 155, glutamine 183, and 203 to 205 (SGH). Lysine 206 is modified (N6-(pyridoxal phosphate)lysine). Threonine 243 contacts pyridoxal 5'-phosphate. Cysteine 328 (cysteine persulfide intermediate) is an active-site residue. Cysteine 328 lines the [2Fe-2S] cluster pocket.

Belongs to the class-V pyridoxal-phosphate-dependent aminotransferase family. NifS/IscS subfamily. As to quaternary structure, homodimer. Forms a heterotetramer with IscU, interacts with other sulfur acceptors. It depends on pyridoxal 5'-phosphate as a cofactor.

Its subcellular location is the cytoplasm. The catalysed reaction is (sulfur carrier)-H + L-cysteine = (sulfur carrier)-SH + L-alanine. It functions in the pathway cofactor biosynthesis; iron-sulfur cluster biosynthesis. Master enzyme that delivers sulfur to a number of partners involved in Fe-S cluster assembly, tRNA modification or cofactor biosynthesis. Catalyzes the removal of elemental sulfur atoms from cysteine to produce alanine. Functions as a sulfur delivery protein for Fe-S cluster synthesis onto IscU, an Fe-S scaffold assembly protein, as well as other S acceptor proteins. This Mannheimia succiniciproducens (strain KCTC 0769BP / MBEL55E) protein is Cysteine desulfurase IscS.